Reading from the N-terminus, the 200-residue chain is Elongation factor Ts (200 aa).

The tract at residues 82 to 85 (TDFV) is involved in Mg(2+) ion dislocation from EF-Tu.

Belongs to the EF-Ts family.

It is found in the cytoplasm. Its function is as follows. Associates with the EF-Tu.GDP complex and induces the exchange of GDP to GTP. It remains bound to the aminoacyl-tRNA.EF-Tu.GTP complex up to the GTP hydrolysis stage on the ribosome. This Solidesulfovibrio magneticus (strain ATCC 700980 / DSM 13731 / RS-1) (Desulfovibrio magneticus) protein is Elongation factor Ts.